A 340-amino-acid chain; its full sequence is S-adenosylmethionine:tRNA ribosyltransferase-isomerase (340 aa).

This sequence belongs to the QueA family. In terms of assembly, monomer.

The protein localises to the cytoplasm. It catalyses the reaction 7-aminomethyl-7-carbaguanosine(34) in tRNA + S-adenosyl-L-methionine = epoxyqueuosine(34) in tRNA + adenine + L-methionine + 2 H(+). It participates in tRNA modification; tRNA-queuosine biosynthesis. Transfers and isomerizes the ribose moiety from AdoMet to the 7-aminomethyl group of 7-deazaguanine (preQ1-tRNA) to give epoxyqueuosine (oQ-tRNA). The chain is S-adenosylmethionine:tRNA ribosyltransferase-isomerase from Nitratiruptor sp. (strain SB155-2).